Consider the following 398-residue polypeptide: Elongation factor Tu (398 aa).

Positions 10-207 (KPHVNIGTIG…TVDEYIPEPE (198 aa)) constitute a tr-type G domain. Residues 19-26 (GHVDHGKT) form a G1 region. Residue 19 to 26 (GHVDHGKT) participates in GTP binding. Mg(2+) is bound at residue threonine 26. The tract at residues 63 to 67 (GITIN) is G2. Residues 84–87 (DAPG) form a G3 region. GTP-binding positions include 84–88 (DAPGH) and 139–142 (NKVD). Residues 139–142 (NKVD) form a G4 region. The G5 stretch occupies residues 177–179 (SAL).

Belongs to the TRAFAC class translation factor GTPase superfamily. Classic translation factor GTPase family. EF-Tu/EF-1A subfamily. As to quaternary structure, monomer.

It localises to the cytoplasm. The catalysed reaction is GTP + H2O = GDP + phosphate + H(+). Its function is as follows. GTP hydrolase that promotes the GTP-dependent binding of aminoacyl-tRNA to the A-site of ribosomes during protein biosynthesis. The chain is Elongation factor Tu from Streptococcus agalactiae serotype Ia (strain ATCC 27591 / A909 / CDC SS700).